Here is a 358-residue protein sequence, read N- to C-terminus: Sulfoquinovosyl glycerol transport ATP-binding protein SmoE (358 aa).

Residues 4–234 (VSLRKLDKSY…PESVFVGGFV (231 aa)) enclose the ABC transporter domain. 36–43 (GPSGCGKS) lines the ATP pocket.

Belongs to the ABC transporter superfamily. The complex is probably composed of two ATP-binding proteins (SmoE), two transmembrane proteins (SmoG and SmoH) and a solute-binding protein (SmoF).

The protein localises to the cell inner membrane. Functionally, part of the ABC transporter complex SmoEFGH involved in sulfoquinovosyl glycerol (SQGro) uptake. Responsible for energy coupling to the transport system. The protein is Sulfoquinovosyl glycerol transport ATP-binding protein SmoE of Agrobacterium fabrum (strain C58 / ATCC 33970) (Agrobacterium tumefaciens (strain C58)).